The following is a 64-amino-acid chain: Disintegrin VB7B (64 aa).

Positions 1-64 (ELLQNSGNPC…TGISSDCPRN (64 aa)) constitute a Disintegrin domain. Intrachain disulfides connect cysteine 10-cysteine 33, cysteine 24-cysteine 30, cysteine 29-cysteine 54, and cysteine 42-cysteine 61. The short motif at 46–48 (KGD) is the Cell attachment site; atypical (KGD) element.

The protein belongs to the venom metalloproteinase (M12B) family. P-II subfamily. P-IIe sub-subfamily. Heterodimer with VB7A; disulfide-linked. Expressed by the venom gland.

The protein localises to the secreted. In terms of biological role, poor inhibitor of platelet aggregation. The disintegrin inhibits the adhesion of cells expressing the RGD-dependent integrin alpha-5/beta-1 (ITGA5/ITGB1) to immobilized fibronectin. Inhibition on alpha-IIb/beta-3 (ITGA2B/ITGB3) is low. This Vipera berus berus (Common viper) protein is Disintegrin VB7B.